Reading from the N-terminus, the 361-residue chain is ATP-dependent 6-phosphofructokinase 1 (361 aa).

ATP contacts are provided by residues Gly-14, 79 to 80, and 116 to 119; these read KG and GDGS. Residue Asp-117 coordinates Mg(2+). Substrate contacts are provided by residues 140–142, Arg-177, 184–186, Glu-237, Arg-278, and 284–287; these read TID, MGR, and HIQR. Asp-142 serves as the catalytic Proton acceptor.

The protein belongs to the phosphofructokinase type A (PFKA) family. Mixed-substrate PFK group III subfamily. Homodimer or homotetramer. Requires Mg(2+) as cofactor.

It localises to the cytoplasm. The enzyme catalyses beta-D-fructose 6-phosphate + ATP = beta-D-fructose 1,6-bisphosphate + ADP + H(+). Its pathway is carbohydrate degradation; glycolysis; D-glyceraldehyde 3-phosphate and glycerone phosphate from D-glucose: step 3/4. Catalyzes the phosphorylation of D-fructose 6-phosphate to fructose 1,6-bisphosphate by ATP, the first committing step of glycolysis. The polypeptide is ATP-dependent 6-phosphofructokinase 1 (Synechocystis sp. (strain ATCC 27184 / PCC 6803 / Kazusa)).